We begin with the raw amino-acid sequence, 293 residues long: Homoserine kinase (293 aa).

P84–A94 serves as a coordination point for ATP.

The protein belongs to the GHMP kinase family. Homoserine kinase subfamily.

The protein localises to the cytoplasm. It catalyses the reaction L-homoserine + ATP = O-phospho-L-homoserine + ADP + H(+). It functions in the pathway amino-acid biosynthesis; L-threonine biosynthesis; L-threonine from L-aspartate: step 4/5. In terms of biological role, catalyzes the ATP-dependent phosphorylation of L-homoserine to L-homoserine phosphate. The polypeptide is Homoserine kinase (Nautilia profundicola (strain ATCC BAA-1463 / DSM 18972 / AmH)).